A 197-amino-acid polypeptide reads, in one-letter code: Recombination protein RecR (197 aa).

The C4-type zinc finger occupies 56-71 (CQQCRNLSETEICGFC). The Toprim domain occupies 79–174 (DQLCIVETPT…SVTRLAQGIP (96 aa)).

This sequence belongs to the RecR family.

May play a role in DNA repair. It seems to be involved in an RecBC-independent recombinational process of DNA repair. It may act with RecF and RecO. The protein is Recombination protein RecR of Hydrogenovibrio crunogenus (strain DSM 25203 / XCL-2) (Thiomicrospira crunogena).